A 533-amino-acid polypeptide reads, in one-letter code: CWF19-like protein 1 homolog (533 aa).

The interval 290–314 (EMGGAEDGAGNGRKRHNDGGNDGPR) is disordered.

This sequence belongs to the CWF19 family.

In Caenorhabditis elegans, this protein is CWF19-like protein 1 homolog.